The primary structure comprises 345 residues: L-threonine 3-dehydrogenase (345 aa).

Cys-42 contributes to the Zn(2+) binding site. Catalysis depends on charge relay system residues Thr-44 and His-47. The Zn(2+) site is built by His-67, Glu-68, Cys-97, Cys-100, Cys-103, and Cys-111. Residues Ile-179, Asp-199, Arg-204, 266 to 268 (LGI), and 290 to 291 (IY) contribute to the NAD(+) site.

Belongs to the zinc-containing alcohol dehydrogenase family. In terms of assembly, homotetramer. It depends on Zn(2+) as a cofactor.

It is found in the cytoplasm. The enzyme catalyses L-threonine + NAD(+) = (2S)-2-amino-3-oxobutanoate + NADH + H(+). It functions in the pathway amino-acid degradation; L-threonine degradation via oxydo-reductase pathway; glycine from L-threonine: step 1/2. Functionally, catalyzes the NAD(+)-dependent oxidation of L-threonine to 2-amino-3-ketobutyrate. In Rhizobium rhizogenes (strain K84 / ATCC BAA-868) (Agrobacterium radiobacter), this protein is L-threonine 3-dehydrogenase.